Reading from the N-terminus, the 346-residue chain is Ribosomal RNA small subunit methyltransferase H (346 aa).

S-adenosyl-L-methionine-binding positions include 47–49 (GGY), Asp-65, Phe-92, Asp-113, and Gln-120. Basic and acidic residues predominate over residues 270–279 (RGEAPSRRLP). The segment at 270-346 (RGEAPSRRLP…ALPQRAAKGR (77 aa)) is disordered.

It belongs to the methyltransferase superfamily. RsmH family.

It localises to the cytoplasm. The catalysed reaction is cytidine(1402) in 16S rRNA + S-adenosyl-L-methionine = N(4)-methylcytidine(1402) in 16S rRNA + S-adenosyl-L-homocysteine + H(+). Functionally, specifically methylates the N4 position of cytidine in position 1402 (C1402) of 16S rRNA. The protein is Ribosomal RNA small subunit methyltransferase H of Methylocella silvestris (strain DSM 15510 / CIP 108128 / LMG 27833 / NCIMB 13906 / BL2).